A 597-amino-acid chain; its full sequence is Aspartate--tRNA(Asp/Asn) ligase (597 aa).

Glutamate 170 contributes to the L-aspartate binding site. The interval 194 to 197 is aspartate; sequence QLFK. Residue arginine 216 participates in L-aspartate binding. ATP contacts are provided by residues 216-218 and glutamine 225; that span reads RDE. L-aspartate is bound at residue histidine 448. ATP is bound at residue glutamate 482. Arginine 489 contributes to the L-aspartate binding site. 534-537 provides a ligand contact to ATP; that stretch reads GWDR. The disordered stretch occupies residues 558–597; sequence GGGVDPLTDAPAPITAAQRKESGIDAKPEKAEKAGKPADA. A compositionally biased stretch (basic and acidic residues) spans 575–597; it reads QRKESGIDAKPEKAEKAGKPADA.

It belongs to the class-II aminoacyl-tRNA synthetase family. Type 1 subfamily. In terms of assembly, homodimer.

It is found in the cytoplasm. It carries out the reaction tRNA(Asx) + L-aspartate + ATP = L-aspartyl-tRNA(Asx) + AMP + diphosphate. Functionally, aspartyl-tRNA synthetase with relaxed tRNA specificity since it is able to aspartylate not only its cognate tRNA(Asp) but also tRNA(Asn). Reaction proceeds in two steps: L-aspartate is first activated by ATP to form Asp-AMP and then transferred to the acceptor end of tRNA(Asp/Asn). The chain is Aspartate--tRNA(Asp/Asn) ligase from Mycobacteroides abscessus (strain ATCC 19977 / DSM 44196 / CCUG 20993 / CIP 104536 / JCM 13569 / NCTC 13031 / TMC 1543 / L948) (Mycobacterium abscessus).